The following is a 72-amino-acid chain: uncharacterized protein (72 aa).

This is an uncharacterized protein from Escherichia coli O157:H7.